Here is a 246-residue protein sequence, read N- to C-terminus: 4-hydroxy-tetrahydrodipicolinate reductase (246 aa).

Residues 7-12 (GATGRT), 84-86 (GTT), and 108-111 (ASNF) each bind NAD(+). Histidine 140 acts as the Proton donor/acceptor in catalysis. Histidine 141 is a binding site for (S)-2,3,4,5-tetrahydrodipicolinate. Lysine 144 functions as the Proton donor in the catalytic mechanism. 150-151 (GT) contributes to the (S)-2,3,4,5-tetrahydrodipicolinate binding site.

It belongs to the DapB family.

It is found in the cytoplasm. It carries out the reaction (S)-2,3,4,5-tetrahydrodipicolinate + NAD(+) + H2O = (2S,4S)-4-hydroxy-2,3,4,5-tetrahydrodipicolinate + NADH + H(+). The enzyme catalyses (S)-2,3,4,5-tetrahydrodipicolinate + NADP(+) + H2O = (2S,4S)-4-hydroxy-2,3,4,5-tetrahydrodipicolinate + NADPH + H(+). Its pathway is amino-acid biosynthesis; L-lysine biosynthesis via DAP pathway; (S)-tetrahydrodipicolinate from L-aspartate: step 4/4. Catalyzes the conversion of 4-hydroxy-tetrahydrodipicolinate (HTPA) to tetrahydrodipicolinate. The sequence is that of 4-hydroxy-tetrahydrodipicolinate reductase from Natronomonas pharaonis (strain ATCC 35678 / DSM 2160 / CIP 103997 / JCM 8858 / NBRC 14720 / NCIMB 2260 / Gabara) (Halobacterium pharaonis).